A 342-amino-acid chain; its full sequence is Type II restriction enzyme CviAII (342 aa).

It catalyses the reaction Endonucleolytic cleavage of DNA to give specific double-stranded fragments with terminal 5'-phosphates.. Functionally, a P subtype restriction enzyme that recognizes the double-stranded sequence 5'-CATG-3' and cleaves after C-1. The chain is Type II restriction enzyme CviAII (CVIAIIR) from Chlorella (PBCV-1).